Consider the following 273-residue polypeptide: Phosphatidylglycerol--prolipoprotein diacylglyceryl transferase (273 aa).

Helical transmembrane passes span 20-40 (LAVR…LPIA), 59-79 (FLFY…VLFY), and 97-117 (GGMS…YFSW). Arg142 lines the a 1,2-diacyl-sn-glycero-3-phospho-(1'-sn-glycerol) pocket. The next 2 helical transmembrane spans lie at 206–226 (FGFL…FCEF) and 243–263 (MGQL…VYAM).

The protein belongs to the Lgt family.

The protein localises to the cell inner membrane. The catalysed reaction is L-cysteinyl-[prolipoprotein] + a 1,2-diacyl-sn-glycero-3-phospho-(1'-sn-glycerol) = an S-1,2-diacyl-sn-glyceryl-L-cysteinyl-[prolipoprotein] + sn-glycerol 1-phosphate + H(+). It participates in protein modification; lipoprotein biosynthesis (diacylglyceryl transfer). Functionally, catalyzes the transfer of the diacylglyceryl group from phosphatidylglycerol to the sulfhydryl group of the N-terminal cysteine of a prolipoprotein, the first step in the formation of mature lipoproteins. This Gluconobacter oxydans (strain 621H) (Gluconobacter suboxydans) protein is Phosphatidylglycerol--prolipoprotein diacylglyceryl transferase.